A 299-amino-acid chain; its full sequence is Tyrosine recombinase XerC (299 aa).

A Core-binding (CB) domain is found at 1 to 85 (MERQLDAYCE…AVRGLYHYLN (85 aa)). The 180-residue stretch at 106-285 (RLPKTLDTDR…DFQHLAAVYD (180 aa)) folds into the Tyr recombinase domain. Residues arginine 146, lysine 170, histidine 237, arginine 240, and histidine 263 contribute to the active site. Tyrosine 272 (O-(3'-phospho-DNA)-tyrosine intermediate) is an active-site residue.

The protein belongs to the 'phage' integrase family. XerC subfamily. In terms of assembly, forms a cyclic heterotetrameric complex composed of two molecules of XerC and two molecules of XerD.

The protein localises to the cytoplasm. Functionally, site-specific tyrosine recombinase, which acts by catalyzing the cutting and rejoining of the recombining DNA molecules. The XerC-XerD complex is essential to convert dimers of the bacterial chromosome into monomers to permit their segregation at cell division. It also contributes to the segregational stability of plasmids. The protein is Tyrosine recombinase XerC of Pseudomonas fluorescens (strain Pf0-1).